The sequence spans 404 residues: Chorismate synthase (404 aa).

Residues arginine 40 and arginine 46 each coordinate NADP(+). FMN-binding positions include 135–137, 256–257, glycine 300, 315–319, and arginine 341; these read RAS, QA, and KPIST.

Belongs to the chorismate synthase family. Homotetramer. FMNH2 is required as a cofactor.

It carries out the reaction 5-O-(1-carboxyvinyl)-3-phosphoshikimate = chorismate + phosphate. Its pathway is metabolic intermediate biosynthesis; chorismate biosynthesis; chorismate from D-erythrose 4-phosphate and phosphoenolpyruvate: step 7/7. Functionally, catalyzes the anti-1,4-elimination of the C-3 phosphate and the C-6 proR hydrogen from 5-enolpyruvylshikimate-3-phosphate (EPSP) to yield chorismate, which is the branch point compound that serves as the starting substrate for the three terminal pathways of aromatic amino acid biosynthesis. This reaction introduces a second double bond into the aromatic ring system. This chain is Chorismate synthase, found in Mycobacterium sp. (strain JLS).